A 705-amino-acid chain; its full sequence is Phosphatidylinositol 4-phosphate 5-kinase 3 (705 aa).

MORN repeat units lie at residues 58–80 (YNGG…DGCM), 81–103 (YEGE…SGAT), 104–126 (YEGQ…DGDT), 127–149 (YRGH…NGDG), 150–172 (YQGN…DGNE), 173–195 (YVGE…NGNR), and 196–218 (YDGL…EEKT). The region spanning 321–701 (TVTAGHKNYD…RFRDFINKIF (381 aa)) is the PIPK domain. The segment at 661–682 (YDITKKLEHAYKSLHADPASIS) is activation loop.

It is found in the cell membrane. The catalysed reaction is a 1,2-diacyl-sn-glycero-3-phospho-(1D-myo-inositol 4-phosphate) + ATP = a 1,2-diacyl-sn-glycero-3-phospho-(1D-myo-inositol-4,5-bisphosphate) + ADP + H(+). In terms of biological role, with DRP1A and DRP2B, required for the precise coordination of polar ARAC3/ROP6 and ARAC4/ROP2 placement and subsequent root hair positioning during planar polarity formation in root hair-forming cells, probably by mediating the correct basal-to-planar polarity switching of D6PK into the polar, lipid-enriched domain. In Arabidopsis thaliana (Mouse-ear cress), this protein is Phosphatidylinositol 4-phosphate 5-kinase 3.